Reading from the N-terminus, the 594-residue chain is CTP synthase (594 aa).

The interval 1–272 (MARPKNVKYV…DLRVLKKLGL (272 aa)) is amidoligase domain. Ser-18 lines the CTP pocket. Residue Ser-18 coordinates UTP. 19-24 (SLGKGI) serves as a coordination point for ATP. Position 59 (Tyr-59) interacts with L-glutamine. Asp-76 contacts ATP. Positions 76 and 146 each coordinate Mg(2+). Residues 153 to 155 (DIE), 193 to 198 (KTKPTQ), and Lys-229 contribute to the CTP site. Residues 193 to 198 (KTKPTQ) and Lys-229 each bind UTP. In terms of domain architecture, Glutamine amidotransferase type-1 spans 299–543 (TIVVCGKYTE…VGAAKSYAAV (245 aa)). L-glutamine is bound at residue Gly-363. Catalysis depends on Cys-390, which acts as the Nucleophile; for glutamine hydrolysis. L-glutamine-binding positions include 391–394 (LGMQ), Glu-414, and Arg-471. Residues His-516 and Glu-518 contribute to the active site. The segment covering 562–571 (AEAYAAYSEE) has biased composition (low complexity). A disordered region spans residues 562–594 (AEAYAAYSEESSAESKSFFPDNGGHDEERDSGQ). The span at 584 to 594 (GGHDEERDSGQ) shows a compositional bias: basic and acidic residues.

This sequence belongs to the CTP synthase family. In terms of assembly, homotetramer.

It catalyses the reaction UTP + L-glutamine + ATP + H2O = CTP + L-glutamate + ADP + phosphate + 2 H(+). It carries out the reaction L-glutamine + H2O = L-glutamate + NH4(+). The enzyme catalyses UTP + NH4(+) + ATP = CTP + ADP + phosphate + 2 H(+). It functions in the pathway pyrimidine metabolism; CTP biosynthesis via de novo pathway; CTP from UDP: step 2/2. With respect to regulation, allosterically activated by GTP, when glutamine is the substrate; GTP has no effect on the reaction when ammonia is the substrate. The allosteric effector GTP functions by stabilizing the protein conformation that binds the tetrahedral intermediate(s) formed during glutamine hydrolysis. Inhibited by the product CTP, via allosteric rather than competitive inhibition. Catalyzes the ATP-dependent amination of UTP to CTP with either L-glutamine or ammonia as the source of nitrogen. Regulates intracellular CTP levels through interactions with the four ribonucleotide triphosphates. The chain is CTP synthase from Chlorobium phaeovibrioides (strain DSM 265 / 1930) (Prosthecochloris vibrioformis (strain DSM 265)).